The following is a 356-amino-acid chain: Alanine racemase, catabolic (356 aa).

Catalysis depends on K35, which acts as the Proton acceptor; specific for D-alanine. K35 is modified (N6-(pyridoxal phosphate)lysine). Substrate is bound at residue R130. Y253 acts as the Proton acceptor; specific for L-alanine in catalysis. Residue M301 participates in substrate binding.

The protein belongs to the alanine racemase family. Requires pyridoxal 5'-phosphate as cofactor.

The enzyme catalyses L-alanine = D-alanine. Functionally, isomerizes L-alanine to D-alanine which is then oxidized to pyruvate by DadA. The chain is Alanine racemase, catabolic (dadB) from Klebsiella aerogenes (Enterobacter aerogenes).